A 179-amino-acid polypeptide reads, in one-letter code: MAELATIARPYADALYKAQGSDLATTALWVDKLAAVAGNAQLLQFADSPKVSVDQVFDVVAGVASNANDPLPEAARNFLRLVIENGRLSALPEIASQFRSLKNAAGGMTDAVVFSAFPMDEQALNDIAAVLEKRFGRKLGIKVELDPSLIGGIRAVVGDEVLDTSVKARLEQMKMALIA.

The protein belongs to the ATPase delta chain family. As to quaternary structure, F-type ATPases have 2 components, F(1) - the catalytic core - and F(0) - the membrane proton channel. F(1) has five subunits: alpha(3), beta(3), gamma(1), delta(1), epsilon(1). F(0) has three main subunits: a(1), b(2) and c(10-14). The alpha and beta chains form an alternating ring which encloses part of the gamma chain. F(1) is attached to F(0) by a central stalk formed by the gamma and epsilon chains, while a peripheral stalk is formed by the delta and b chains.

It localises to the cell inner membrane. Its function is as follows. F(1)F(0) ATP synthase produces ATP from ADP in the presence of a proton or sodium gradient. F-type ATPases consist of two structural domains, F(1) containing the extramembraneous catalytic core and F(0) containing the membrane proton channel, linked together by a central stalk and a peripheral stalk. During catalysis, ATP synthesis in the catalytic domain of F(1) is coupled via a rotary mechanism of the central stalk subunits to proton translocation. In terms of biological role, this protein is part of the stalk that links CF(0) to CF(1). It either transmits conformational changes from CF(0) to CF(1) or is implicated in proton conduction. In Polaromonas naphthalenivorans (strain CJ2), this protein is ATP synthase subunit delta.